The following is a 486-amino-acid chain: uncharacterized protein (486 aa).

2 ABC transporter domains span residues 2-241 (VEFK…KVFV) and 249-486 (FEKD…LLFL). Residue 36 to 43 (GKNGEGKS) coordinates ATP.

The protein belongs to the ABC transporter superfamily.

This is an uncharacterized protein from Borreliella burgdorferi (strain ATCC 35210 / DSM 4680 / CIP 102532 / B31) (Borrelia burgdorferi).